The sequence spans 78 residues: Omega-conotoxin-like SO-4 (78 aa).

The signal sequence occupies residues 1 to 22 (MKLTCMVIVAVLLLTACQLITA). Residues 23–42 (DDSRGTQKHRSLRSTTKVSK) constitute a propeptide that is removed on maturation. 3 disulfides stabilise this stretch: C46–C62, C53–C65, and C61–C72.

It belongs to the conotoxin O1 superfamily. Expressed by the venom duct.

The protein localises to the secreted. In terms of biological role, omega-conotoxins act at presynaptic membranes, they bind and block voltage-gated calcium channels (Cav). The sequence is that of Omega-conotoxin-like SO-4 (SO4) from Conus striatus (Striated cone).